Reading from the N-terminus, the 172-residue chain is Allergen Bos d 2 (172 aa).

An N-terminal signal peptide occupies residues 1 to 16 (MKAVFLTLLFGLVCTA). The residue at position 17 (Q17) is a Pyrrolidone carboxylic acid. 2 disulfides stabilise this stretch: C60-C64 and C79-C170.

This sequence belongs to the calycin superfamily. Lipocalin family. Found exclusively in skin. Produced in sweat glands and transported to the skin surface.

Its subcellular location is the secreted. In terms of biological role, probable pheromone carrier. The protein is Allergen Bos d 2 of Bos taurus (Bovine).